The chain runs to 127 residues: Spore germination protein 2 (127 aa).

The N-terminal stretch at 1–25 is a signal peptide; that stretch reads MNIRNSLILIISTILFFSIINGSLS. Asn-54 and Asn-118 each carry an N-linked (GlcNAc...) asparagine glycan.

The protein belongs to the Dictyostelium gerABC family.

It is found in the secreted. The polypeptide is Spore germination protein 2 (gerB) (Dictyostelium discoideum (Social amoeba)).